Consider the following 119-residue polypeptide: Large ribosomal subunit protein bL20 (119 aa).

This sequence belongs to the bacterial ribosomal protein bL20 family.

In terms of biological role, binds directly to 23S ribosomal RNA and is necessary for the in vitro assembly process of the 50S ribosomal subunit. It is not involved in the protein synthesizing functions of that subunit. The sequence is that of Large ribosomal subunit protein bL20 from Buchnera aphidicola subsp. Cinara cedri (strain Cc).